A 239-amino-acid polypeptide reads, in one-letter code: ATP-dependent dethiobiotin synthetase BioD (239 aa).

Residue 15–20 (EIGKTF) coordinates ATP. Threonine 19 lines the Mg(2+) pocket. Lysine 40 is an active-site residue. ATP contacts are provided by residues aspartate 57, 118 to 121 (EGVG), and 178 to 179 (NH). Positions 57 and 118 each coordinate Mg(2+).

This sequence belongs to the dethiobiotin synthetase family. In terms of assembly, homodimer. Mg(2+) serves as cofactor.

The protein localises to the cytoplasm. The enzyme catalyses (7R,8S)-7,8-diammoniononanoate + CO2 + ATP = (4R,5S)-dethiobiotin + ADP + phosphate + 3 H(+). The protein operates within cofactor biosynthesis; biotin biosynthesis; biotin from 7,8-diaminononanoate: step 1/2. Catalyzes a mechanistically unusual reaction, the ATP-dependent insertion of CO2 between the N7 and N8 nitrogen atoms of 7,8-diaminopelargonic acid (DAPA, also called 7,8-diammoniononanoate) to form a ureido ring. In Burkholderia cenocepacia (strain ATCC BAA-245 / DSM 16553 / LMG 16656 / NCTC 13227 / J2315 / CF5610) (Burkholderia cepacia (strain J2315)), this protein is ATP-dependent dethiobiotin synthetase BioD.